The chain runs to 226 residues: MEPIKNLPRLCRTLGYEFNNIELLIQALTHRSAANKHNERLEFLGDSILSIAISDALYHQFPKATEGDLSRMRATLVKGDTLTIIAKEFKLGDYLYLGPGELKSGGFRRESILADAVEAIIGAVYLDADIEVCRKLLLSWYQERLAEIKPGINQKDPKTILQEYLQGFKKPLPDYQVVAVEGEAHDQTFTVECKISELDKVVTGVASSRRKAEQLAAAQVLELLNK.

Positions L7 to D129 constitute an RNase III domain. E42 provides a ligand contact to Mg(2+). D46 is an active-site residue. D115 and E118 together coordinate Mg(2+). E118 is an active-site residue. Residues D156–K226 form the DRBM domain.

The protein belongs to the ribonuclease III family. Homodimer. Mg(2+) is required as a cofactor.

The protein resides in the cytoplasm. The enzyme catalyses Endonucleolytic cleavage to 5'-phosphomonoester.. Its function is as follows. Digests double-stranded RNA. Involved in the processing of primary rRNA transcript to yield the immediate precursors to the large and small rRNAs (23S and 16S). Processes some mRNAs, and tRNAs when they are encoded in the rRNA operon. Processes pre-crRNA and tracrRNA of type II CRISPR loci if present in the organism. The chain is Ribonuclease 3 from Shewanella frigidimarina (strain NCIMB 400).